The following is a 90-amino-acid chain: Acylphosphatase (90 aa).

The Acylphosphatase-like domain occupies 5–90 (CERFIVKGHV…YKPFRGFKIL (86 aa)). Active-site residues include R20 and N38.

It belongs to the acylphosphatase family.

It catalyses the reaction an acyl phosphate + H2O = a carboxylate + phosphate + H(+). The chain is Acylphosphatase (acyP) from Vibrio parahaemolyticus serotype O3:K6 (strain RIMD 2210633).